The following is a 258-amino-acid chain: Synapse differentiation-inducing gene protein 1 (258 aa).

At Met-1–His-181 the chain is on the cytoplasmic side. Ser-137 carries the phosphoserine modification. Residues Leu-182–Tyr-202 form a helical membrane-spanning segment. Over Leu-203–Phe-228 the chain is Extracellular. An intramembrane region (helical) is located at residues Leu-229–Ile-249. Over Ala-250–Leu-258 the chain is Extracellular.

Belongs to the CD225/Dispanin family. As to quaternary structure, homodimer. Interacts with GRIA1 and GRIA2. As to expression, enriched in the cerebellum and also expressed in the neocortex and modestly in the hippocampus (at protein level). Expressed in hippocampal neurons, both in cell body and neurites, however its presence is enriched at excitatory synapses and also found in postsynaptic cells.

The protein resides in the cell membrane. Its subcellular location is the early endosome membrane. The protein localises to the postsynaptic density membrane. It is found in the synapse. It localises to the cell projection. The protein resides in the dendrite. Its subcellular location is the dendritic spine. May regulate AMPA receptor content at nascent synapses, and have a role in postsynaptic development and maturation. The polypeptide is Synapse differentiation-inducing gene protein 1 (Syndig1) (Rattus norvegicus (Rat)).